The sequence spans 671 residues: Pescadillo homolog (671 aa).

Residues 317–403 (KVRELFRGLT…LMLPVTGYRI (87 aa)) form the BRCT domain. Residues 548-584 (QALRKAQEKSRQTETSEARLQRKMSEVKRQEAATRKM) are a coiled coil. 2 disordered regions span residues 552–578 (KAQEKSRQTETSEARLQRKMSEVKRQE) and 643–671 (RRQRAEAKSKKLKERKAGNPYKKLPKWVQ).

This sequence belongs to the pescadillo family.

It localises to the nucleus. Its subcellular location is the nucleolus. It is found in the nucleoplasm. Its function is as follows. Required for maturation of ribosomal RNAs and formation of the large ribosomal subunit. The sequence is that of Pescadillo homolog from Leishmania infantum.